The chain runs to 434 residues: MAVGIFILSLNPSYELVDWKRVGDTKLVALVRSALVRVKFNDGTSSDSNNQDTNQNALSFDTQESQKALNGSQSGSSDTSGSNSQDFASYILIFQAAPRATWVFERKIKLELPYVKNESGAGDSTTTNSGSLYTTLQDLLVEQPVTPYTPNAGLARVNGAAQDTVHFGSGQESSWNSQRSQKVLKNNPGPKAVTGFKLDKGRAYRKLNEAWPVYEPLDSTKDGKGKDESSWNSSEKTTAESDAPLVGSTGSQMAAVTDSQQSGDNNGLVSLAQRSTTVAVQKSDSSGSQGQGTTDNKFQKYLNTTQALHQMGVIVPSLETWAGENKYWNRYPCCWWCFSPSSDPAIVFHKWRSTECNHPVIPYFNRPTRLLKWPDRCDGFERGTEFVVLGRGWANHVRKGYLMSPHRVELGHRQAEGVCGESAWFQWNQRHRLA.

Disordered regions lie at residues 168 to 193 and 215 to 267; these read GSGQ…PKAV and EPLD…DNNG. Residues 170 to 184 are compositionally biased toward polar residues; it reads GQESSWNSQRSQKVL. Residues 218-229 show a composition bias toward basic and acidic residues; the sequence is DSTKDGKGKDES. The segment covering 248–267 has biased composition (polar residues); it reads STGSQMAAVTDSQQSGDNNG.

Belongs to the MgpC family.

The sequence is that of Putative MgpC-like protein MPN_149 from Mycoplasma pneumoniae (strain ATCC 29342 / M129 / Subtype 1) (Mycoplasmoides pneumoniae).